We begin with the raw amino-acid sequence, 304 residues long: L-lactate dehydrogenase (304 aa).

NAD(+)-binding positions include Val11, Asp32, Arg37, and 76–77 (GA). Substrate contacts are provided by residues Gln79, Arg85, and 117–120 (NPVD). Ser138 provides a ligand contact to NAD(+). 143–146 (DSAR) contacts substrate. Beta-D-fructose 1,6-bisphosphate-binding residues include Arg148 and His163. His170 functions as the Proton acceptor in the catalytic mechanism. Thr225 is a binding site for substrate.

It belongs to the LDH/MDH superfamily. LDH family. Homotetramer.

Its subcellular location is the cytoplasm. It carries out the reaction (S)-lactate + NAD(+) = pyruvate + NADH + H(+). It participates in fermentation; pyruvate fermentation to lactate; (S)-lactate from pyruvate: step 1/1. Its activity is regulated as follows. Allosterically activated by fructose 1,6-bisphosphate (FBP). Its function is as follows. Catalyzes the conversion of lactate to pyruvate. The chain is L-lactate dehydrogenase from Deinococcus radiodurans (strain ATCC 13939 / DSM 20539 / JCM 16871 / CCUG 27074 / LMG 4051 / NBRC 15346 / NCIMB 9279 / VKM B-1422 / R1).